The primary structure comprises 143 residues: Transcriptional regulator MraZ (143 aa).

SpoVT-AbrB domains follow at residues 5–47 and 76–119; these read EYSH…PMAV and ALEA…SAEN.

This sequence belongs to the MraZ family. In terms of assembly, forms oligomers.

The protein localises to the cytoplasm. Its subcellular location is the nucleoid. The chain is Transcriptional regulator MraZ from Leuconostoc mesenteroides subsp. mesenteroides (strain ATCC 8293 / DSM 20343 / BCRC 11652 / CCM 1803 / JCM 6124 / NCDO 523 / NBRC 100496 / NCIMB 8023 / NCTC 12954 / NRRL B-1118 / 37Y).